The chain runs to 188 residues: Apolipoprotein M (188 aa).

Residues Met-1–Gln-22 constitute a signal peptide (not cleaved). Cystine bridges form between Cys-23/Cys-167, Cys-95/Cys-183, and Cys-128/Cys-157. Asn-135 carries an N-linked (GlcNAc...) asparagine glycan. Residues Glu-136 and Arg-143 each coordinate tetradecanoate.

Belongs to the calycin superfamily. Lipocalin family. Highly divergent. Interacts with LRP2; LRP2 mediates APOM renal uptake and subsequent lysosomal degradation. Plasma protein. Expressed in liver and kidney.

It is found in the secreted. Its function is as follows. Probably involved in lipid transport. Can bind sphingosine-1-phosphate, myristic acid, palmitic acid and stearic acid, retinol, all-trans-retinoic acid and 9-cis-retinoic acid. The sequence is that of Apolipoprotein M (APOM) from Homo sapiens (Human).